A 30-amino-acid polypeptide reads, in one-letter code: Snaclec carinactivase-1 regulatory subunit 17 kDa chain (30 aa).

The C-type lectin domain occupies 1 to 30 (DCLPGWSSHEGHCYKVFNQEMYWADAEKFC). Cys-2 and Cys-13 are oxidised to a cystine.

Belongs to the snaclec family. As to quaternary structure, heterodimer of a metalloproteinase subunit and a regulatory subunit comprising two polypeptides disulfide-linked (14 kDa and 17 kDa chains). Expressed by the venom gland.

The protein resides in the secreted. Its function is as follows. Calcium-dependent prothrombin activator. This protein may activate prothrombin via recognition by the regulatory subunit of the calcium ion bound conformation of its gamma-carboxyglutamic acid (GLA) domain, and the subsequent conversion of prothrombin to active thrombin is catalyzed by the catalytic subunit. This Echis carinatus (Saw-scaled viper) protein is Snaclec carinactivase-1 regulatory subunit 17 kDa chain.